A 301-amino-acid chain; its full sequence is Glutamyl-Q tRNA(Asp) synthetase (301 aa).

Residues arginine 8–serine 12 and glutamate 44 each bind L-glutamate. The 'HIGH' region motif lies at proline 11–serine 21. The Zn(2+) site is built by cysteine 100, cysteine 102, tyrosine 122, and cysteine 126. The L-glutamate site is built by tyrosine 180 and arginine 198. Positions lysine 236–glutamine 240 match the 'KMSKS' region motif. Position 239 (lysine 239) interacts with ATP.

The protein belongs to the class-I aminoacyl-tRNA synthetase family. GluQ subfamily. Requires Zn(2+) as cofactor.

In terms of biological role, catalyzes the tRNA-independent activation of glutamate in presence of ATP and the subsequent transfer of glutamate onto a tRNA(Asp). Glutamate is transferred on the 2-amino-5-(4,5-dihydroxy-2-cyclopenten-1-yl) moiety of the queuosine in the wobble position of the QUC anticodon. The chain is Glutamyl-Q tRNA(Asp) synthetase from Dechloromonas aromatica (strain RCB).